A 265-amino-acid chain; its full sequence is MPQWFTSKSDPEDTRIQETLKSSCVLPRHIGIIMDGNGRWAKIKGKSRIAGHVAGVESVRDVVEASSQLGIENLTLFTFSIENWKRPKPEISALMKLLIKVLRKEAVKLLENDIRLEVIGDMEMIPDDVRKTLDETIELTRKNRGMAMTIALSYSGKWDITQACRHIALQVKQGLLDPETIDENLFASYLSTASMPDPDLLIRTSGEYRISNFMLWQNAYSEIIFSNTLWPDFRRNELYEAIREFQKRERRFGKTSEQLKTNEVE.

Residue Asp35 is part of the active site. Asp35 serves as a coordination point for Mg(2+). Residues 36–39 (GNGR), Trp40, Arg48, His52, and 80–82 (SIE) each bind substrate. The active-site Proton acceptor is Asn83. Substrate is bound by residues Trp84, Arg86, Arg203, and 209-211 (RIS). Glu222 contacts Mg(2+).

This sequence belongs to the UPP synthase family. As to quaternary structure, homodimer. Mg(2+) is required as a cofactor.

In terms of biological role, catalyzes the condensation of isopentenyl diphosphate (IPP) with allylic pyrophosphates generating different type of terpenoids. The sequence is that of Isoprenyl transferase from Chlorobaculum tepidum (strain ATCC 49652 / DSM 12025 / NBRC 103806 / TLS) (Chlorobium tepidum).